A 985-amino-acid chain; its full sequence is Probable oxidoreductase YjgC (985 aa).

In terms of domain architecture, 2Fe-2S ferredoxin-type spans 3 to 79; the sequence is GKKTITINGV…GDVIDTLSPD (77 aa). The [2Fe-2S] cluster site is built by Cys-37, Cys-48, Cys-51, and Cys-63. The 4Fe-4S His(Cys)3-ligated-type domain occupies 79–119; the sequence is DVKKAQVIGMDKILYNHELYCTVCDYNNGGCEIHNTVKEMK. Residues His-95, Cys-99, Cys-102, Cys-109, Cys-148, Cys-151, Cys-154, Cys-158, Cys-191, Cys-194, Cys-197, Cys-201, Cys-265, Cys-268, Cys-272, and Cys-300 each contribute to the [4Fe-4S] cluster site. 2 4Fe-4S ferredoxin-type domains span residues 139-170 and 182-211; these read PFYR…LTID and NDVP…EKGM. The 4Fe-4S Mo/W bis-MGD-type domain occupies 258 to 314; the sequence is IKKTKTVCTYCGVGCSFDVWTKGRDILKVEPQEEAPANGISTCVKGKFGWDFVNSEE.

The protein in the C-terminal section; belongs to the prokaryotic molybdopterin-containing oxidoreductase family. [2Fe-2S] cluster serves as cofactor. The cofactor is [4Fe-4S] cluster. Mo-bis(molybdopterin guanine dinucleotide) is required as a cofactor.

The polypeptide is Probable oxidoreductase YjgC (yjgC) (Bacillus subtilis (strain 168)).